The sequence spans 264 residues: ATP synthase subunit a (264 aa).

Transmembrane regions (helical) follow at residues Thr29 to Phe49, Val89 to Met109, Asp134 to Ile154, Ile177 to Leu197, Leu208 to Val228, and Leu235 to Val255.

It belongs to the ATPase A chain family. In terms of assembly, F-type ATPases have 2 components, CF(1) - the catalytic core - and CF(0) - the membrane proton channel. CF(1) has five subunits: alpha(3), beta(3), gamma(1), delta(1), epsilon(1). CF(0) has three main subunits: a(1), b(2) and c(9-12). The alpha and beta chains form an alternating ring which encloses part of the gamma chain. CF(1) is attached to CF(0) by a central stalk formed by the gamma and epsilon chains, while a peripheral stalk is formed by the delta and b chains.

It localises to the cell inner membrane. Key component of the proton channel; it plays a direct role in the translocation of protons across the membrane. This is ATP synthase subunit a from Shewanella sediminis (strain HAW-EB3).